Consider the following 493-residue polypeptide: Vacuolar-processing enzyme (493 aa).

An N-terminal signal peptide occupies residues 1–34 (MAVHRSLLNKPTWCRVAFWWWMLVMVMRIQGTNG). Residues 35–53 (KEQDSVIKLPTQEVDAESD) constitute a propeptide that is removed on maturation. H176 is a catalytic residue. C218 acts as the Nucleophile in catalysis. The cysteines at positions 251 and 265 are disulfide-linked. A glycan (N-linked (GlcNAc...) asparagine) is linked at N318. 2 disulfide bridges follow: C429/C459 and C441/C476.

This sequence belongs to the peptidase C13 family.

Functionally, asparagine-specific endopeptidase involved in the processing of vacuolar seed protein precursors into the mature forms. The protein is Vacuolar-processing enzyme of Phaseolus vulgaris (Kidney bean).